Reading from the N-terminus, the 214-residue chain is MRIILLGAPGTGKGTQAKLITENYNIPKISTGDILRENIQKKNTIGKKIHNILKNGELVSNRIVCNLIGERIQKKDCIHGFLLDGFPRTQKQAEYISNLKIKIDYVLELIVPYELILKRICGRRVHTPSGRIYNINYNPPREEGKDDLTQEKLTIREDDTIEIVKKRLENYEKNSFLLNKYYLREKKLKKLQYFKIDGKQSIYKIQREIKMMLK.

Residue G10–T15 coordinates ATP. An NMP region spans residues S30–V59. Residues T31, R36, E57–V59, G85–R88, and Q92 contribute to the AMP site. The segment at G122–D159 is LID. ATP is bound by residues R123 and I132–Y133. AMP is bound by residues R156 and R167. Q200 serves as a coordination point for ATP.

The protein belongs to the adenylate kinase family. In terms of assembly, monomer.

The protein resides in the cytoplasm. It catalyses the reaction AMP + ATP = 2 ADP. The protein operates within purine metabolism; AMP biosynthesis via salvage pathway; AMP from ADP: step 1/1. Catalyzes the reversible transfer of the terminal phosphate group between ATP and AMP. Plays an important role in cellular energy homeostasis and in adenine nucleotide metabolism. The chain is Adenylate kinase from Buchnera aphidicola subsp. Schizaphis graminum (strain Sg).